A 381-amino-acid chain; its full sequence is Testis-specific expressed protein 55 (381 aa).

Disordered stretches follow at residues 1 to 176 (MDEP…SDPH) and 292 to 317 (TTEY…QSSR). 2 stretches are compositionally biased toward basic and acidic residues: residues 8 to 24 (SLNH…EKNN) and 65 to 103 (RTSE…ERRT). The segment covering 104-113 (SQPPNQQLPS) has biased composition (polar residues). Basic and acidic residues predominate over residues 114–125 (HSERKTSGKIDG). The span at 134-143 (TDQETSEFDD) shows a compositional bias: acidic residues. Polar residues-rich tracts occupy residues 147–163 (SAST…QEYN) and 292–302 (TTEYTSDTTPV). A compositionally biased stretch (low complexity) spans 307–317 (RSSQRSSQSSR).

Testis-specific.

The protein localises to the nucleus. The sequence is that of Testis-specific expressed protein 55 from Mus musculus (Mouse).